A 560-amino-acid chain; its full sequence is Mitogen-activated protein kinase kinase kinase 3 (560 aa).

The tract at residues 70 to 91 is disordered; it reads KRQSSSSSDNTSDKEEVETEET. The Protein kinase domain maps to 303 to 557; it reads WLKGQLLGRG…AAELLHHPFV (255 aa). ATP-binding positions include 309–317 and Lys-331; that span reads LGRGSYASV. Asp-426 functions as the Proton acceptor in the catalytic mechanism.

The protein belongs to the protein kinase superfamily. STE Ser/Thr protein kinase family. MAP kinase kinase kinase subfamily. In terms of tissue distribution, expressed at low levels in roots, stems, siliques, leaves, seedlings and flower buds.

It catalyses the reaction L-seryl-[protein] + ATP = O-phospho-L-seryl-[protein] + ADP + H(+). The catalysed reaction is L-threonyl-[protein] + ATP = O-phospho-L-threonyl-[protein] + ADP + H(+). The chain is Mitogen-activated protein kinase kinase kinase 3 from Arabidopsis thaliana (Mouse-ear cress).